We begin with the raw amino-acid sequence, 271 residues long: Autophagy-related protein 5 (271 aa).

Residue K145 forms a Glycyl lysine isopeptide (Lys-Gly) (interchain with G-Cter in ATG12) linkage.

Belongs to the ATG5 family. Conjugated with ATG12. Interacts with ATG10. The ATG5-ATG12 conjugate forms a complex with several units of ATG16. The ATG12-ATG5 conjugate also associates with ATG3. Post-translationally, conjugated to ATG12; which is essential for autophagy. Conjugation with ATG12 involves ATG7 as an E1-like activating enzyme and ATG10 as an E2-like conjugating enzyme.

It is found in the preautophagosomal structure membrane. In terms of biological role, involved in cytoplasm to vacuole transport (Cvt) and autophagic vesicle formation. Autophagy is essential for maintenance of amino acid levels and protein synthesis under nitrogen starvation. Required for selective autophagic degradation of the nucleus (nucleophagy). Also required for mitophagy, which eliminates defective or superfluous mitochondria in order to fulfill cellular energy requirements and prevent excess ROS production. Conjugation with ATG12, through a ubiquitin-like conjugating system involving ATG7 as an E1-like activating enzyme and ATG10 as an E2-like conjugating enzyme, is essential for its function. The ATG12-ATG5 conjugate acts as an E3-like enzyme which is required for lipidation of ATG8 and ATG8 association to the vesicle membranes. ATG12-ATG5 rearranges the ATG3 catalytic center and enhances its E2 activity. In Kluyveromyces marxianus (strain DMKU3-1042 / BCC 29191 / NBRC 104275) (Yeast), this protein is Autophagy-related protein 5.